Reading from the N-terminus, the 434-residue chain is MQVSVETTSNIERRMTIGVPAQEIDQAVQKRLQETARTVRLNGFRPGKVPMSVVKRRFGDSIRQEVVGEAMRDNYIKALQEQDINPAGWPKLEPKTMEEGKDLEFVATFEVLPEIELGDLSKINVEKPVSEVADKDIDNMIDNLRRQQATMKEVKRKSKNKDIVTIDFKGSIDGEEFEGGSAEGHRLTLGSGQMIPGFEKGIVGGKAGEELEIDVTFPEDYHNEDLAGKDAKFAITIHKVEEPQLPELDQEFFKRFGIEAEDEVAFREEVKKNMERELKQAVSNKVKNDVVDGLLETTELEVPAALVDQEIDRLRQDAVQRFGGQVDFQQLPKEIFEEQAKRRVKTGLLFQEVVKKNDLKADEAKVEEKIQEIASTYEQPDEVVAHFNSNPDQKAQVESSVLEDAVVDFVLGAAKVKEKKMKYEEAVQAGQPQR.

One can recognise a PPIase FKBP-type domain in the interval 161 to 246 (KDIVTIDFKG…IHKVEEPQLP (86 aa)).

It belongs to the FKBP-type PPIase family. Tig subfamily.

Its subcellular location is the cytoplasm. It catalyses the reaction [protein]-peptidylproline (omega=180) = [protein]-peptidylproline (omega=0). Functionally, involved in protein export. Acts as a chaperone by maintaining the newly synthesized protein in an open conformation. Functions as a peptidyl-prolyl cis-trans isomerase. The polypeptide is Trigger factor (Marinobacter nauticus (strain ATCC 700491 / DSM 11845 / VT8) (Marinobacter aquaeolei)).